The primary structure comprises 1239 residues: MFPYPTLNYPPMAPINPMAYRDPNPPRQVAPFRPPLAAQIEDLRRSIANLTLKQRAPNPPAGPPAKRKKPAPSLSLETKKKRPPPPAKKQKRKPKPGKRQRMCMKLESDKTFPIMLNGQVNGYACVVGGRVFKPLHVEGRIDNEQLAAIKLKKASIYDLEYGDVPQCMKSDTLQYTSDKPPGFYNWHHGAVQYENNRFTVPRGVGGKGDSGRPILDNKGRVVAIVQGGVNEGSRTALSVVTWNQKGVTVKDTPEGSEPWSLATVMCVLANITFPCDQPPCMPCCYEKNPHETLTMLEQNYDSRAYDQLLDAAVKCNARRTRRDLDTHFTQYKLARPYIADCPNCGHSRCDSPIAIEEVRGDAHAGVIRIQTSAMFGLKRHGVDLAYMSFMNGKTQKSIKIDNLHVRTSAPCSLVSHHGYYILAQCPPGDTVTVGFHDGPNRHTCRLAHKVEFRPVGREKYRHPPEHGVELPCNRYTHKRADQGHYVEMHQPGLVGDHSLLSIHSAKVKITVPSGAQVKYYCKCPDVREGITSSDHTTTCTDVKQCRAYLIDNKKWVYNSGRLPRGEGDTFKGKLHVPFVPVKAKCIATLAPEPLVEHKHRTLILHLHPDHPTLLTTRSLGSDANPTRQWIERPTTVNFTVTGEGLEYTWGNHPPKRVWAQESGEGNPHGWPHVVVVYYYNRYPLTTIIGLCTCVAIIMVSCDHPCGSFSGLRNLCITPYKLAPNAQVPILLALLCCIKPTRADDTLQVLNYLWNNNQNFFWMQTLIPLAALIVCMRMLAALFCCGPAFLLVCGAWAAAYEHTAVMPNKVGIPYKALVERPGYAPVHLQIQLVNTRIIPSTNLEYITCKYKTKVPSPVVKCCGATQCTSKPHPDYQCQVFTGVYPFMWGGAYCFCDTENTQMSEAYVERSEECSIDHAKAYKVHTGTVQAMVNITYGSVTWRSADVYVNGETPAKIGDAKLIIGPLSSAWSPFDNKVVVYGHEVYNYDFPEYGTGKAGSFGDLQSRTSTSNDLYANTNLKLQRPQAGIVHTPFTQAPSGFERWKRDKGAPLNDVAPFGCSIALEPLRPENCAVGSIPISIDIPDAAFTRISETPTVSDLECKITECTYASDFGGIATLPTNPVKQETVQFIVHQVLQLLKRMTSPLLRAGSFTFHFSTANIHPAFKLQVCTSGITCKGDCKPPKDHIVDYPAQHTESFTSAISATAWSWLKVLVGGTSAFIVLGLIATAVVALVLFFHRH.

Residues methionine 1–proline 35 form a necessary for nucleocapsid assembly and virus assembly region. The tract at residues methionine 1–arginine 101 is disordered. The span at proline 23–proline 34 shows a compositional bias: pro residues. The interval leucine 36 to lysine 69 is host transcription inhibition. Positions leucine 43–leucine 50 match the Supraphysiological nuclear export signal motif. The N-linked (GlcNAc...) asparagine; by host glycan is linked to asparagine 49. The Nuclear localization signal signature appears at lysine 66–lysine 69. Basic residues predominate over residues lysine 79–arginine 101. The segment at lysine 81–threonine 111 is binding to the viral RNA. The ribosome-binding stretch occupies residues proline 96–lysine 110. Residue serine 108 is modified to Phosphoserine. A Peptidase S3 domain is found at lysine 110 to tryptophan 259. Threonine 111 carries the post-translational modification Phosphothreonine. Histidine 136 (charge relay system) is an active-site residue. Positions lysine 152–tyrosine 157 are interaction with spike glycoprotein E2. Active-site charge relay system residues include aspartate 158 and serine 210. The tract at residues glutamine 244–threonine 248 is interaction with spike glycoprotein E2. The tract at residues serine 260–isoleucine 271 is functions as an uncleaved signal peptide for the precursor of protein E3/E2. Residues serine 260–arginine 681 lie on the Extracellular side of the membrane. Cystine bridges form between cysteine 266–cysteine 275, cysteine 280–cysteine 284, cysteine 283–cysteine 315, cysteine 341–cysteine 444, cysteine 344–cysteine 349, cysteine 411–cysteine 425, cysteine 472–cysteine 585, cysteine 521–cysteine 545, and cysteine 523–cysteine 539. A glycan (N-linked (GlcNAc...) asparagine; by host) is linked at asparagine 270. Residue asparagine 637 is glycosylated (N-linked (GlcNAc...) asparagine; by host). Residues tyrosine 682–aspartate 702 traverse the membrane as a helical segment. At histidine 703–alanine 742 the chain is on the cytoplasmic side. The S-palmitoyl cysteine; by host moiety is linked to residue cysteine 705. The interval glycine 710–leucine 714 is interaction with the capsid protein. The tract at residues leucine 714 to leucine 734 is transient transmembrane before p62-6K protein processing. S-palmitoyl cysteine; by host attachment occurs at residues cysteine 715, cysteine 735, and cysteine 736. Cysteine 715 and cysteine 736 are disulfide-bonded. The Extracellular portion of the chain corresponds to aspartate 743–asparagine 754. Residues asparagine 755 to methionine 775 traverse the membrane as a helical segment. Residue arginine 776 is a topological domain, cytoplasmic. The chain crosses the membrane as a helical span at residues methionine 777–alanine 797. Residues alanine 798–glycine 1215 are Extracellular-facing. 4 disulfide bridges follow: cysteine 847–cysteine 912, cysteine 860–cysteine 892, cysteine 861–cysteine 894, and cysteine 866–cysteine 876. Residues valine 882–threonine 899 are E1 fusion peptide loop. N-linked (GlcNAc...) asparagine; by host glycans are attached at residues asparagine 932 and asparagine 1069. 3 disulfides stabilise this stretch: cysteine 1058-cysteine 1070, cysteine 1100-cysteine 1175, and cysteine 1105-cysteine 1179. The chain crosses the membrane as a helical span at residues threonine 1216–phenylalanine 1236. Residues histidine 1237–histidine 1239 lie on the Cytoplasmic side of the membrane.

As to quaternary structure, homodimer. Homomultimer. Interacts with host karyopherin KPNA4; this interaction allows the nuclear import of the viral capsid protein. Interacts with spike glycoprotein E2. Interacts with host IRAK1; the interaction leads to inhibition of IRAK1-dependent signaling. Part of a tetrameric complex composed of host CRM1, host importin alpha/beta dimer and the viral capsid; this complex blocks the receptor-mediated transport through the nuclear pore. Interacts with host phosphatase PPP1CA; this interaction dephosphorylates the capsid protein, which increases its ability to bind to the viral genome. The precursor of protein E3/E2 and E1 form a heterodimer shortly after synthesis. In terms of assembly, the precursor of protein E3/E2 and E1 form a heterodimer shortly after synthesis. Processing of the precursor of protein E3/E2 into E2 and E3 results in a heterodimer of the spike glycoproteins E2 and E1. Spike at virion surface are constituted of three E2-E1 heterodimers. After target cell attachment and endocytosis, E1 change conformation to form homotrimers. E2-E1 heterodimers interact with host VLDLR or LRP8/APOER2 to mediate viral entry. Interacts with 6K protein. As to quaternary structure, interacts with spike glycoprotein E1. Processing of the precursor of protein E3/E2 into E2 and E3 results in a heterodimer of the spike glycoproteins E2 and E1. Spike at virion surface are constituted of a trimer of E2-E1 heterodimers. Interacts with 6K protein. E2-E1 heterodimers interact with host VLDLR or LRP8/APOER2 to mediate viral entry. Interacts (via E2-A) with host VLDLR (via class A repeats); this interaction mediates viral entry into host cell. Interacts with host LRP8/APOER2 (via class A repeats); this interaction mediates viral entry into host cell. Oligomer. Interacts with spike glycoprotein E1. Interacts with spike glycoprotein E2. Structural polyprotein: Specific enzymatic cleavages in vivo yield mature proteins. Capsid protein is auto-cleaved during polyprotein translation, unmasking a signal peptide at the N-terminus of the precursor of E3/E2. The remaining polyprotein is then targeted to the host endoplasmic reticulum, where host signal peptidase cleaves it into pE2, 6K and E1 proteins. pE2 is further processed to mature E3 and E2 by host furin in trans-Golgi vesicle. Post-translationally, phosphorylated on serine and threonine residues. In terms of processing, palmitoylated via thioester bonds. These palmitoylations may induce disruption of the C-terminus transmembrane. This would result in the reorientation of E2 C-terminus from lumenal to cytoplasmic side. N-glycosylated. Post-translationally, palmitoylated via thioester bonds.

The protein localises to the virion. Its subcellular location is the host cytoplasm. The protein resides in the host cell membrane. It localises to the host nucleus. It is found in the virion membrane. The protein localises to the host Golgi apparatus. Its subcellular location is the host trans-Golgi network. The protein resides in the host endoplasmic reticulum. The catalysed reaction is Autocatalytic release of the core protein from the N-terminus of the togavirus structural polyprotein by hydrolysis of a -Trp-|-Ser- bond.. Forms an icosahedral capsid with a T=4 symmetry composed of 240 copies of the capsid protein surrounded by a lipid membrane through which penetrate 80 spikes composed of trimers of E1-E2 heterodimers. The capsid protein binds to the viral RNA genome at a site adjacent to a ribosome binding site for viral genome translation following genome release. Possesses a protease activity that results in its autocatalytic cleavage from the nascent structural protein. Following its self-cleavage, the capsid protein transiently associates with ribosomes, and within several minutes the protein binds to viral RNA and rapidly assembles into icosahedric core particles. The resulting nucleocapsid eventually associates with the cytoplasmic domain of the spike glycoprotein E2 at the cell membrane, leading to budding and formation of mature virions. In case of infection, new virions attach to target cells and after clathrin-mediated endocytosis their membrane fuses with the host endosomal membrane. This leads to the release of the nucleocapsid into the cytoplasm, followed by an uncoating event necessary for the genomic RNA to become accessible. The uncoating might be triggered by the interaction of capsid proteins with ribosomes. Binding of ribosomes would release the genomic RNA since the same region is genomic RNA-binding and ribosome-binding. Specifically inhibits interleukin-1 receptor-associated kinase 1/IRAK1-dependent signaling during viral entry, representing a means by which the alphaviruses may evade innate immune detection and activation prior to viral gene expression. Inhibits host transcription. Forms a tetrameric complex with XPO1/CRM1 and the nuclear import receptor importin. This complex blocks the central channel of host nuclear pores thereby inhibiting the receptor-mediated nuclear transport and thus the host mRNA and rRNA transcription. The inhibition of transcription is linked to a cytopathic effect on the host cell. In terms of biological role, provides the signal sequence for the translocation of the precursor of protein E3/E2 to the host endoplasmic reticulum. Furin-cleaved E3 remains associated with spike glycoprotein E1 and mediates pH protection of the latter during the transport via the secretory pathway. After virion release from the host cell, the assembly protein E3 is gradually released in the extracellular space. Its function is as follows. Plays a role in viral attachment to target host cell, by binding to the cell receptors VLDLR or LRP8/APOER2. Synthesized as a p62 precursor which is processed by furin at the cell membrane just before virion budding, giving rise to E2-E1 heterodimer. The p62-E1 heterodimer is stable, whereas E2-E1 is unstable and dissociate at low pH. p62 is processed at the last step, presumably to avoid E1 fusion activation before its final export to cell surface. E2 C-terminus contains a transitory transmembrane that would be disrupted by palmitoylation, resulting in reorientation of the C-terminal tail from lumenal to cytoplasmic side. This step is critical since E2 C-terminus is involved in budding by interacting with capsid proteins. This release of E2 C-terminus in cytoplasm occurs lately in protein export, and precludes premature assembly of particles at the endoplasmic reticulum membrane. Functionally, acts as a viroporin that participates in virus glycoprotein processing and transport to the plasma membrane, cell permeabilization and budding of viral particles. Disrupts the calcium homeostasis of the cell, probably at the endoplasmic reticulum level. This leads to cytoplasmic calcium elevation. Because of its lipophilic properties, the 6K protein is postulated to influence the selection of lipids that interact with the transmembrane domains of the glycoproteins, which, in turn, affects the deformability of the bilayer required for the extreme curvature that occurs as budding proceeds. Present in low amount in virions, about 3% compared to viral glycoproteins. Class II viral fusion protein. Fusion activity is inactive as long as E1 is bound to E2 in mature virion. After virus attachment to target cell via host VLDLR or LRP8/APOER2 and endocytosis, acidification of the endosome induces dissociation of E1/E2 heterodimer and concomitant trimerization of the E1 subunits. This E1 trimer is fusion active, and promotes release of viral nucleocapsid in cytoplasm after endosome and viral membrane fusion. Efficient fusion requires the presence of cholesterol and sphingolipid in the target membrane. The sequence is that of Structural polyprotein from Aedes (Human).